Consider the following 380-residue polypeptide: Chaperone protein DnaJ (380 aa).

Positions 5 to 69 (DFYEVLGVGR…QKKAAYDQYG (65 aa)) constitute a J domain. The CR-type zinc-finger motif lies at 135-213 (GCSKEIRVPT…CHGQGRVEKT (79 aa)). 8 residues coordinate Zn(2+): Cys148, Cys151, Cys165, Cys168, Cys187, Cys190, Cys201, and Cys204. CXXCXGXG motif repeat units lie at residues 148-155 (CDSCDGSG), 165-172 (CGTCHGQG), 187-194 (CPHCHGRG), and 201-208 (CNSCHGQG).

This sequence belongs to the DnaJ family. As to quaternary structure, homodimer. Zn(2+) is required as a cofactor.

It localises to the cytoplasm. Its function is as follows. Participates actively in the response to hyperosmotic and heat shock by preventing the aggregation of stress-denatured proteins and by disaggregating proteins, also in an autonomous, DnaK-independent fashion. Unfolded proteins bind initially to DnaJ; upon interaction with the DnaJ-bound protein, DnaK hydrolyzes its bound ATP, resulting in the formation of a stable complex. GrpE releases ADP from DnaK; ATP binding to DnaK triggers the release of the substrate protein, thus completing the reaction cycle. Several rounds of ATP-dependent interactions between DnaJ, DnaK and GrpE are required for fully efficient folding. Also involved, together with DnaK and GrpE, in the DNA replication of plasmids through activation of initiation proteins. The polypeptide is Chaperone protein DnaJ (Photobacterium profundum (strain SS9)).